We begin with the raw amino-acid sequence, 405 residues long: Multi-drug resistance efflux pump PmrA homolog (405 aa).

Transmembrane regions (helical) follow at residues 13–33 (LFIT…VMPF), 50–70 (LYSG…APIW), 88–108 (IVMT…WLLG), 111–131 (LLMG…ASQA), 147–167 (MVSG…WFGM), 170–190 (VFLI…FFVH), 216–236 (ILFG…SIEP), 254–274 (FISG…SSFL), 286–306 (LILI…FVQS), 308–328 (LQLG…TPSV), 350–370 (MCSN…AGYI), and 374–394 (AAIV…FINF).

It belongs to the major facilitator superfamily. TCR/Tet family.

Its subcellular location is the cell membrane. Efflux pump for various substrates. In Lactococcus lactis subsp. lactis (strain IL1403) (Streptococcus lactis), this protein is Multi-drug resistance efflux pump PmrA homolog (pmrA).